A 68-amino-acid polypeptide reads, in one-letter code: DNA-directed RNA polymerase subunit omega (68 aa).

It belongs to the RNA polymerase subunit omega family. The RNAP catalytic core consists of 2 alpha, 1 beta, 1 beta' and 1 omega subunit. When a sigma factor is associated with the core the holoenzyme is formed, which can initiate transcription.

The enzyme catalyses RNA(n) + a ribonucleoside 5'-triphosphate = RNA(n+1) + diphosphate. In terms of biological role, promotes RNA polymerase assembly. Latches the N- and C-terminal regions of the beta' subunit thereby facilitating its interaction with the beta and alpha subunits. In Brevibacillus brevis (strain 47 / JCM 6285 / NBRC 100599), this protein is DNA-directed RNA polymerase subunit omega.